The primary structure comprises 185 residues: Iodate reductase subunit IdrB (185 aa).

A signal peptide (tat-type signal) is located at residues 1–46 (MTTHPIHLHHDDPAHGGERACMSRRSFLLAGGAMVTLASLPGTAVA). The 100-residue stretch at 69-168 (GEPLEFAYPY…LEVRGDDIYA (100 aa)) folds into the Rieske domain. 4 residues coordinate [2Fe-2S] cluster: Cys-109, His-111, Cys-130, and His-133.

Belongs to the AOX family. In terms of assembly, the iodate reductase (Idr) complex is composed of a molybdopterin-dependent iodate reductase (IdrA and IdrB subunits) and two associated peroxidases (IdrP1 and IdrP2). [2Fe-2S] cluster serves as cofactor. Post-translationally, predicted to be exported by the Tat system. The position of the signal peptide cleavage has not been experimentally proven.

The protein resides in the periplasm. Its function is as follows. Involved in iodate respiration. May accept electrons from cytochrome c551, and catalyze the reduction of iodate (IO(3)(-)) to produce the chemically unstable intermediate hypoiodous acid (HIO). This intermediate then undergoes abiotic disproportionation to yield two molecules of iodide (I(-)) and one molecule of iodate. The resultant iodate subsequently cycles back into the reductive pathway. The initial reduction of iodate may inadvertently produce low levels of incidental toxic H(2)O(2), which is detoxified by IdrP1 and IdrP2. The chain is Iodate reductase subunit IdrB from Denitromonas iodatirespirans.